The sequence spans 212 residues: MSMLTVAMPKGRIFDEAVGLLRKAGYNLPAEFEASRKLIVDVPEENMRFILAKPMDVPTYVEHGVADVGVAGKDVMLEEERDVYEVLDLKISECYLAVAGLPNYEKKHDLNPKVASKYPHLATRYFKEQGEQVEIIKLNGSIELAPLIGLADRIVDIVSTGRTLRENGLVELEKMMTITSRLIVNPVSYRMKDERIDEMVERLLQVVEGDGA.

Belongs to the ATP phosphoribosyltransferase family. Short subfamily. In terms of assembly, heteromultimer composed of HisG and HisZ subunits.

It localises to the cytoplasm. It catalyses the reaction 1-(5-phospho-beta-D-ribosyl)-ATP + diphosphate = 5-phospho-alpha-D-ribose 1-diphosphate + ATP. It participates in amino-acid biosynthesis; L-histidine biosynthesis; L-histidine from 5-phospho-alpha-D-ribose 1-diphosphate: step 1/9. In terms of biological role, catalyzes the condensation of ATP and 5-phosphoribose 1-diphosphate to form N'-(5'-phosphoribosyl)-ATP (PR-ATP). Has a crucial role in the pathway because the rate of histidine biosynthesis seems to be controlled primarily by regulation of HisG enzymatic activity. The chain is ATP phosphoribosyltransferase (hisG) from Halalkalibacterium halodurans (strain ATCC BAA-125 / DSM 18197 / FERM 7344 / JCM 9153 / C-125) (Bacillus halodurans).